Here is a 92-residue protein sequence, read N- to C-terminus: Probable Fe(2+)-trafficking protein (92 aa).

It belongs to the Fe(2+)-trafficking protein family.

Functionally, could be a mediator in iron transactions between iron acquisition and iron-requiring processes, such as synthesis and/or repair of Fe-S clusters in biosynthetic enzymes. The polypeptide is Probable Fe(2+)-trafficking protein (Anaeromyxobacter sp. (strain Fw109-5)).